Here is a 506-residue protein sequence, read N- to C-terminus: Sodium-coupled neutral amino acid symporter 2 (506 aa).

The disordered stretch occupies residues 1 to 23; that stretch reads MKKAEMGRFNISPDEDSSSYSSN. Topologically, residues 1 to 76 are cytoplasmic; sequence MKKAEMGRFN…HPGTTSFGMS (76 aa). The regulates protein turnover upon amino acid deprivation stretch occupies residues 1–96; it reads MKKAEMGRFN…SGILGLSYAM (96 aa). Phosphoserine occurs at positions 12, 21, 22, and 55. Residues 77 to 96 form a helical membrane-spanning segment; the sequence is VFNLSNAIVGSGILGLSYAM. Residue Asn-82 coordinates Na(+). The Extracellular segment spans residues 97–102; it reads ANTGIA. A helical transmembrane segment spans residues 103 to 123; the sequence is LFIILLTFVSIFSLYSVHLLL. Residues 124–158 lie on the Cytoplasmic side of the membrane; that stretch reads KTANEGGSLLYEQLGYKAFGLVGKLAASGSITMQN. A helical transmembrane segment spans residues 159-177; that stretch reads IGAMSSYLFIVKYELPLVI. Residues 178–188 lie on the Extracellular side of the membrane; sequence QALTNIEDKTG. A helical transmembrane segment spans residues 189 to 209; it reads LWYLNGNYLVLLVSLVVILPL. The Cytoplasmic portion of the chain corresponds to 210–217; sequence SLFRNLGY. Residues 218 to 238 form a helical membrane-spanning segment; it reads LGYTSGLSLLCMVFFLIVVIC. Over 239 to 292 the chain is Extracellular; that stretch reads KKFQVPCPVEAALIINETINTTLTQPTALVPALSHNVTENDSCRPHYFIFNSQT. Cys-245 and Cys-281 form a disulfide bridge. 2 N-linked (GlcNAc...) asparagine glycosylation sites follow: Asn-258 and Asn-274. The helical transmembrane segment at 293 to 313 threads the bilayer; sequence VYAVPILIFSFVCHPAVLPIY. Over 314–329 the chain is Cytoplasmic; the sequence is EELKDRSRRRMMNVSK. A helical transmembrane segment spans residues 330 to 350; it reads ISFFAMFLMYLLAALFGYLTF. At 351–371 the chain is on the extracellular side; it reads YEHVESELLHTYSSILGTDIL. Residues 372-392 form a helical membrane-spanning segment; it reads LLIVRLAVLMAVTLTVPVVIF. Position 386 (Thr-386) interacts with Na(+). The Cytoplasmic segment spans residues 393-413; that stretch reads PIRSSVTHLLCASKDFSWWRH. The helical transmembrane segment at 414–434 threads the bilayer; sequence SLITVSILAFTNLLVIFVPTI. Over 435 to 436 the chain is Extracellular; it reads RD. Residues 437–457 form a helical membrane-spanning segment; the sequence is IFGFIGASAASMLIFILPSAF. At 458–472 the chain is on the cytoplasmic side; that stretch reads YIKLVKKEPMKSVQK. Residues 473–495 traverse the membrane as a helical segment; the sequence is IGALFFLLSGVLVMTGSMALIVL. Residues 496 to 506 are Extracellular-facing; the sequence is DWVHNAPGGGH.

The protein belongs to the amino acid/polyamine transporter 2 family. Post-translationally, polyubiquitination by NEDD4L regulates the degradation and the activity of SLC38A2.

It is found in the cell membrane. It carries out the reaction L-alanine(in) + Na(+)(in) = L-alanine(out) + Na(+)(out). The catalysed reaction is glycine(in) + Na(+)(in) = glycine(out) + Na(+)(out). It catalyses the reaction L-serine(in) + Na(+)(in) = L-serine(out) + Na(+)(out). The enzyme catalyses L-proline(in) + Na(+)(in) = L-proline(out) + Na(+)(out). It carries out the reaction L-methionine(in) + Na(+)(in) = L-methionine(out) + Na(+)(out). The catalysed reaction is L-histidine(in) + Na(+)(in) = L-histidine(out) + Na(+)(out). It catalyses the reaction L-asparagine(in) + Na(+)(in) = L-asparagine(out) + Na(+)(out). The enzyme catalyses L-glutamine(in) + Na(+)(in) = L-glutamine(out) + Na(+)(out). It carries out the reaction L-threonine(in) + Na(+)(in) = L-threonine(out) + Na(+)(out). The catalysed reaction is L-leucine(in) + Na(+)(in) = L-leucine(out) + Na(+)(out). It catalyses the reaction L-phenylalanine(in) + Na(+)(in) = L-phenylalanine(out) + Na(+)(out). Its activity is regulated as follows. Inhibited by N-methyl-D-glucamine. Inhibited by choline. Allosteric regulation of sodium ions binding by pH. Symporter that cotransports neutral amino acids and sodium ions from the extracellular to the intracellular side of the cell membrane. The transport is pH-sensitive, Li(+)-intolerant, electrogenic, driven by the Na(+) electrochemical gradient and cotransports of neutral amino acids and sodium ions with a stoichiometry of 1:1. May function in the transport of amino acids at the blood-brain barrier. May function in the transport of amino acids in the supply of maternal nutrients to the fetus through the placenta. Maintains a key metabolic glutamine/glutamate balance underpinning retrograde signaling by dendritic release of the neurotransmitter glutamate. Transports L-proline in differentiating osteoblasts for the efficient synthesis of proline-enriched proteins and provides proline essential for osteoblast differentiation and bone formation during bone development. This chain is Sodium-coupled neutral amino acid symporter 2, found in Pan paniscus (Pygmy chimpanzee).